Here is a 274-residue protein sequence, read N- to C-terminus: 2,3,4,5-tetrahydropyridine-2,6-dicarboxylate N-succinyltransferase (274 aa).

Substrate-binding residues include Arg104 and Asp141.

It belongs to the transferase hexapeptide repeat family. In terms of assembly, homotrimer.

Its subcellular location is the cytoplasm. The enzyme catalyses (S)-2,3,4,5-tetrahydrodipicolinate + succinyl-CoA + H2O = (S)-2-succinylamino-6-oxoheptanedioate + CoA. It participates in amino-acid biosynthesis; L-lysine biosynthesis via DAP pathway; LL-2,6-diaminopimelate from (S)-tetrahydrodipicolinate (succinylase route): step 1/3. The chain is 2,3,4,5-tetrahydropyridine-2,6-dicarboxylate N-succinyltransferase from Idiomarina loihiensis (strain ATCC BAA-735 / DSM 15497 / L2-TR).